A 261-amino-acid polypeptide reads, in one-letter code: Uridine-cytidine kinase 2 (261 aa).

Residues 1–16 show a composition bias toward polar residues; it reads MAGDSEQTLQNHQQPN. Positions 1–24 are disordered; it reads MAGDSEQTLQNHQQPNGGEPFLIG. N-acetylalanine is present on Ala-2. 27 to 35 is an ATP binding site; it reads GGTASGKSS. The substrate site is built by Asp-84, Tyr-112, His-117, Arg-166, Arg-176, and Gln-184. Asp-213 contacts ATP. Residues 236–261 are disordered; sequence RQTNGCLNGYTPSRKRQASESSSRPH. Ser-254 bears the Phosphoserine mark.

Belongs to the uridine kinase family. Homotetramer. As to expression, according to PubMed:8812458; testis-specific. According to PubMed:11306702, placenta-specific.

The catalysed reaction is uridine + ATP = UMP + ADP + H(+). The enzyme catalyses cytidine + ATP = CMP + ADP + H(+). The protein operates within pyrimidine metabolism; CTP biosynthesis via salvage pathway; CTP from cytidine: step 1/3. It functions in the pathway pyrimidine metabolism; UMP biosynthesis via salvage pathway; UMP from uridine: step 1/1. Functionally, phosphorylates uridine and cytidine to uridine monophosphate and cytidine monophosphate. Does not phosphorylate deoxyribonucleosides or purine ribonucleosides. Can use ATP or GTP as a phosphate donor. Can also phosphorylate cytidine and uridine nucleoside analogs such as 6-azauridine, 5-fluorouridine, 4-thiouridine, 5-bromouridine, N(4)-acetylcytidine, N(4)-benzoylcytidine, 5-fluorocytidine, 2-thiocytidine, 5-methylcytidine, and N(4)-anisoylcytidine. This chain is Uridine-cytidine kinase 2 (UCK2), found in Homo sapiens (Human).